The primary structure comprises 1486 residues: Chromosome partition protein MukB (1486 aa).

An ATP-binding site is contributed by 34–41 (GGNGAGKS). Coiled coils occupy residues 326–418 (LEAD…QYNQ), 444–480 (LETFQAKELEATEKMLSLEQKMSMAQTAHSQFEQAYQ), and 509–603 (RHLA…RAPV). The interval 666-783 (PGGSEDQRLN…EVPLFGRAAR (118 aa)) is flexible hinge. Coiled coils occupy residues 835–923 (EAEI…AKLE), 977–1115 (EMLS…TAKA), and 1209–1266 (VEAI…QNVS).

This sequence belongs to the SMC family. MukB subfamily. In terms of assembly, homodimerization via its hinge domain. Binds to DNA via its C-terminal region. Interacts, and probably forms a ternary complex, with MukE and MukF via its C-terminal region. The complex formation is stimulated by calcium or magnesium. Interacts with tubulin-related protein FtsZ.

Its subcellular location is the cytoplasm. It localises to the nucleoid. Its function is as follows. Plays a central role in chromosome condensation, segregation and cell cycle progression. Functions as a homodimer, which is essential for chromosome partition. Involved in negative DNA supercoiling in vivo, and by this means organize and compact chromosomes. May achieve or facilitate chromosome segregation by condensation DNA from both sides of a centrally located replisome during cell division. In Escherichia coli (strain 55989 / EAEC), this protein is Chromosome partition protein MukB.